The following is a 337-amino-acid chain: tRNA N6-adenosine threonylcarbamoyltransferase (337 aa).

Fe cation contacts are provided by His111 and His115. Substrate contacts are provided by residues 134 to 138, Asp167, Gly180, and Asn272; that span reads LVSGG. Asp300 provides a ligand contact to Fe cation.

The protein belongs to the KAE1 / TsaD family. The cofactor is Fe(2+).

It is found in the cytoplasm. It catalyses the reaction L-threonylcarbamoyladenylate + adenosine(37) in tRNA = N(6)-L-threonylcarbamoyladenosine(37) in tRNA + AMP + H(+). In terms of biological role, required for the formation of a threonylcarbamoyl group on adenosine at position 37 (t(6)A37) in tRNAs that read codons beginning with adenine. Is involved in the transfer of the threonylcarbamoyl moiety of threonylcarbamoyl-AMP (TC-AMP) to the N6 group of A37, together with TsaE and TsaB. TsaD likely plays a direct catalytic role in this reaction. In Escherichia coli O127:H6 (strain E2348/69 / EPEC), this protein is tRNA N6-adenosine threonylcarbamoyltransferase.